Reading from the N-terminus, the 402-residue chain is Phosphoribulokinase, chloroplastic (402 aa).

A chloroplast-targeting transit peptide spans 1 to 51; the sequence is MAVCTVYTIPTTTHLGSSFNQNNKQVFFNYKRSSSSNNTLFTTRPSYVITC. A disulfide bridge connects residues C67 and C106.

Belongs to the phosphoribulokinase family.

Its subcellular location is the plastid. The protein localises to the chloroplast. It carries out the reaction D-ribulose 5-phosphate + ATP = D-ribulose 1,5-bisphosphate + ADP + H(+). It functions in the pathway carbohydrate biosynthesis; Calvin cycle. Its activity is regulated as follows. Light regulated via thioredoxin by reversible oxidation/reduction of sulfhydryl/disulfide groups. The sequence is that of Phosphoribulokinase, chloroplastic from Spinacia oleracea (Spinach).